The following is a 32-amino-acid chain: Photosystem II reaction center protein T (32 aa).

The helical transmembrane segment at 3–23 (ALVYTFLLIGTLVVIFFAIFF) threads the bilayer.

The protein belongs to the PsbT family. As to quaternary structure, PSII is composed of 1 copy each of membrane proteins PsbA, PsbB, PsbC, PsbD, PsbE, PsbF, PsbH, PsbI, PsbJ, PsbK, PsbL, PsbM, PsbT, PsbX, PsbY, PsbZ, Psb30/Ycf12, at least 3 peripheral proteins of the oxygen-evolving complex and a large number of cofactors. It forms dimeric complexes.

The protein resides in the plastid. It is found in the chloroplast thylakoid membrane. Functionally, found at the monomer-monomer interface of the photosystem II (PS II) dimer, plays a role in assembly and dimerization of PSII. PSII is a light-driven water plastoquinone oxidoreductase, using light energy to abstract electrons from H(2)O, generating a proton gradient subsequently used for ATP formation. This Emiliania huxleyi (Coccolithophore) protein is Photosystem II reaction center protein T.